The primary structure comprises 466 residues: Probable agmatine/putrescine antiporter AguD (466 aa).

12 consecutive transmembrane segments (helical) span residues 8 to 28, 30 to 50, 85 to 105, 120 to 140, 144 to 164, 192 to 212, 226 to 246, 273 to 293, 325 to 345, 350 to 370, 398 to 418, and 426 to 446; these read FSLF…EAAA, VAAI…AFLL, ASWF…VLCP, ISLL…LYPV, VWIL…LGGL, LSFI…CTFA, IIIG…GIGV, WFIS…MVSW, WGAA…APLL, LFWS…IPVF, VYMA…AIPL, and TEQL…ELII.

This sequence belongs to the amino acid-polyamine-organocation (APC) superfamily. Glutamate:GABA antiporter (GGA) (TC 2.A.3.7) family.

The protein localises to the cell membrane. Probably catalyzes agmatine/putrescine exchange. This chain is Probable agmatine/putrescine antiporter AguD, found in Lactococcus lactis subsp. lactis (strain IL1403) (Streptococcus lactis).